The following is a 242-amino-acid chain: 4-hydroxy-tetrahydrodipicolinate reductase (242 aa).

Residues 8–13 (GAKGRM), 75–77 (GTT), and 99–102 (ATNM) contribute to the NAD(+) site. His131 acts as the Proton donor/acceptor in catalysis. His132 lines the (S)-2,3,4,5-tetrahydrodipicolinate pocket. The Proton donor role is filled by Lys135. 141–142 (GT) is a (S)-2,3,4,5-tetrahydrodipicolinate binding site.

Belongs to the DapB family.

It localises to the cytoplasm. The enzyme catalyses (S)-2,3,4,5-tetrahydrodipicolinate + NAD(+) + H2O = (2S,4S)-4-hydroxy-2,3,4,5-tetrahydrodipicolinate + NADH + H(+). It catalyses the reaction (S)-2,3,4,5-tetrahydrodipicolinate + NADP(+) + H2O = (2S,4S)-4-hydroxy-2,3,4,5-tetrahydrodipicolinate + NADPH + H(+). It functions in the pathway amino-acid biosynthesis; L-lysine biosynthesis via DAP pathway; (S)-tetrahydrodipicolinate from L-aspartate: step 4/4. Functionally, catalyzes the conversion of 4-hydroxy-tetrahydrodipicolinate (HTPA) to tetrahydrodipicolinate. This Campylobacter jejuni subsp. jejuni serotype O:2 (strain ATCC 700819 / NCTC 11168) protein is 4-hydroxy-tetrahydrodipicolinate reductase.